Consider the following 507-residue polypeptide: FSD1-like protein (507 aa).

Residues 70–109 are a coiled coil; the sequence is KQEQVRKSQELQSQLSQCNNALENSEELLEFATRSLDIKE. Positions 105–162 constitute a COS domain; sequence LDIKEPEEFSKAARQIKDRVTMASAFRLSLKPKVSDNMTHLMVDFSQERQMLQTLKFL. Residues 164 to 268 form the Fibronectin type-III domain; it reads VPKAPEIDPV…DPVTLETRAL (105 aa). The 194-residue stretch at 291–484 folds into the B30.2/SPRY domain; that stretch reads DPTGGKGQES…LSTGMQVPSA (194 aa). The interval 292 to 345 is disordered; sequence PTGGKGQESKIKGKENKGSVHVTSLKKHTSGTPSPKRTSVGSRPPAVRGSRDRF. A compositionally biased stretch (basic and acidic residues) spans 298–309; the sequence is QESKIKGKENKG. Residues 321–332 are compositionally biased toward polar residues; that stretch reads SGTPSPKRTSVG. 2 positions are modified to phosphoserine: Ser498 and Ser501.

This is FSD1-like protein (Fsd1l) from Mus musculus (Mouse).